Consider the following 155-residue polypeptide: 6,7-dimethyl-8-ribityllumazine synthase (155 aa).

5-amino-6-(D-ribitylamino)uracil-binding positions include Phe-24, 58–60 (AFE), and 82–84 (VLI). 87–88 (AT) provides a ligand contact to (2S)-2-hydroxy-3-oxobutyl phosphate. His-90 acts as the Proton donor in catalysis. Phe-115 is a binding site for 5-amino-6-(D-ribitylamino)uracil. Arg-129 provides a ligand contact to (2S)-2-hydroxy-3-oxobutyl phosphate.

It belongs to the DMRL synthase family.

It carries out the reaction (2S)-2-hydroxy-3-oxobutyl phosphate + 5-amino-6-(D-ribitylamino)uracil = 6,7-dimethyl-8-(1-D-ribityl)lumazine + phosphate + 2 H2O + H(+). It functions in the pathway cofactor biosynthesis; riboflavin biosynthesis; riboflavin from 2-hydroxy-3-oxobutyl phosphate and 5-amino-6-(D-ribitylamino)uracil: step 1/2. Functionally, catalyzes the formation of 6,7-dimethyl-8-ribityllumazine by condensation of 5-amino-6-(D-ribitylamino)uracil with 3,4-dihydroxy-2-butanone 4-phosphate. This is the penultimate step in the biosynthesis of riboflavin. This Chloroherpeton thalassium (strain ATCC 35110 / GB-78) protein is 6,7-dimethyl-8-ribityllumazine synthase.